We begin with the raw amino-acid sequence, 430 residues long: Tyrosine--tRNA ligase (430 aa).

Residue tyrosine 32 coordinates L-tyrosine. Positions 37 to 46 (PTADSLHIGH) match the 'HIGH' region motif. Tyrosine 172 and glutamine 176 together coordinate L-tyrosine. Positions 232–236 (KFGKT) match the 'KMSKS' region motif. Residue lysine 235 coordinates ATP. The S4 RNA-binding domain maps to 362 to 429 (VKAVDLFVDN…GKKNYYLIIA (68 aa)).

This sequence belongs to the class-I aminoacyl-tRNA synthetase family. TyrS type 1 subfamily. As to quaternary structure, homodimer.

Its subcellular location is the cytoplasm. It catalyses the reaction tRNA(Tyr) + L-tyrosine + ATP = L-tyrosyl-tRNA(Tyr) + AMP + diphosphate + H(+). In terms of biological role, catalyzes the attachment of tyrosine to tRNA(Tyr) in a two-step reaction: tyrosine is first activated by ATP to form Tyr-AMP and then transferred to the acceptor end of tRNA(Tyr). In Bacteroides fragilis (strain ATCC 25285 / DSM 2151 / CCUG 4856 / JCM 11019 / LMG 10263 / NCTC 9343 / Onslow / VPI 2553 / EN-2), this protein is Tyrosine--tRNA ligase.